Consider the following 102-residue polypeptide: Small ribosomal subunit protein uS10 (102 aa).

This sequence belongs to the universal ribosomal protein uS10 family. As to quaternary structure, part of the 30S ribosomal subunit.

Its function is as follows. Involved in the binding of tRNA to the ribosomes. This Xanthobacter autotrophicus (strain ATCC BAA-1158 / Py2) protein is Small ribosomal subunit protein uS10.